Consider the following 681-residue polypeptide: Ribosomal L1 domain-containing protein CG13096 (681 aa).

Disordered regions lie at residues 1–248 and 579–681; these read MVKV…AKSK and DAAP…DDEE. A phosphoserine mark is found at S15 and S17. Basic and acidic residues predominate over residues 54–74; it reads VKKDAIKKEPEVSKKGAEKKQ. A Phosphoserine modification is found at S89. Residues 103 to 112 are compositionally biased toward low complexity; it reads KPAASGAPVG. A Phosphoserine modification is found at S128. Over residues 189–217 the composition is skewed to low complexity; that stretch reads QAAPAKPAKAQPASQLQKKAKAVQKLSKP. Over residues 599–610 the composition is skewed to basic and acidic residues; sequence KESSSEGAKADA. A compositionally biased stretch (acidic residues) spans 611-681; it reads ESDEEEEVEE…EDDDDDDDEE (71 aa).

This sequence belongs to the universal ribosomal protein uL1 family. Highly divergent.

The polypeptide is Ribosomal L1 domain-containing protein CG13096 (Drosophila melanogaster (Fruit fly)).